A 358-amino-acid polypeptide reads, in one-letter code: UPF0725 protein At4g29550 (358 aa).

Residues 31-82 are disordered; it reads LNKHPPSGSGWTDEDDDNDDVFSSSFISKEELSDAVHNDPPSGWTDEDDDDQ. A compositionally biased stretch (basic and acidic residues) spans 58–67; sequence SKEELSDAVH.

The protein belongs to the UPF0725 (EMB2204) family.

The sequence is that of UPF0725 protein At4g29550 from Arabidopsis thaliana (Mouse-ear cress).